Reading from the N-terminus, the 393-residue chain is Glutamyl-tRNA reductase (393 aa).

Residues threonine 47 to arginine 50, serine 98, glutamate 103 to aspartate 105, and glutamine 109 contribute to the substrate site. Cysteine 48 functions as the Nucleophile in the catalytic mechanism. Glycine 177–glycine 182 is an NADP(+) binding site.

It belongs to the glutamyl-tRNA reductase family. Homodimer.

It carries out the reaction (S)-4-amino-5-oxopentanoate + tRNA(Glu) + NADP(+) = L-glutamyl-tRNA(Glu) + NADPH + H(+). It functions in the pathway porphyrin-containing compound metabolism; protoporphyrin-IX biosynthesis; 5-aminolevulinate from L-glutamyl-tRNA(Glu): step 1/2. In terms of biological role, catalyzes the NADPH-dependent reduction of glutamyl-tRNA(Glu) to glutamate 1-semialdehyde (GSA). This is Glutamyl-tRNA reductase from Pyrobaculum neutrophilum (strain DSM 2338 / JCM 9278 / NBRC 100436 / V24Sta) (Thermoproteus neutrophilus).